The primary structure comprises 1080 residues: Kinesin-like protein KIN-14E (1080 aa).

The interval 1-35 (MDFSWTTGWEKAAADDDEAESAPAPAPPAPSPQEA) is disordered. The stretch at 247–355 (QTRTSKLISK…KQEQTLLSLE (109 aa)) forms a coiled coil. The 323-residue stretch at 407–729 (NIRVFCRCRP…LNFASRVRRI (323 aa)) folds into the Kinesin motor domain. 490–497 (GQTGTGKT) is an ATP binding site. Residues 736 to 893 (KQVDTAELQK…EHHRSVAESK (158 aa)) adopt a coiled-coil conformation. A compositionally biased stretch (basic and acidic residues) spans 960–970 (AMSEKEQHILR). The interval 960 to 1080 (AMSEKEQHIL…AVNKTRGWVR (121 aa)) is disordered. Polar residues predominate over residues 971 to 985 (SSDSMNKKVTNNSSI). Residues 1047 to 1059 (TATSKTAAATHKT) are compositionally biased toward low complexity.

The protein belongs to the TRAFAC class myosin-kinesin ATPase superfamily. Kinesin family. KIN-14 subfamily.

The sequence is that of Kinesin-like protein KIN-14E from Oryza sativa subsp. japonica (Rice).